The chain runs to 353 residues: Phosphate acyltransferase (353 aa).

The protein belongs to the PlsX family. In terms of assembly, homodimer. Probably interacts with PlsY.

Its subcellular location is the cytoplasm. It catalyses the reaction a fatty acyl-[ACP] + phosphate = an acyl phosphate + holo-[ACP]. It participates in lipid metabolism; phospholipid metabolism. In terms of biological role, catalyzes the reversible formation of acyl-phosphate (acyl-PO(4)) from acyl-[acyl-carrier-protein] (acyl-ACP). This enzyme utilizes acyl-ACP as fatty acyl donor, but not acyl-CoA. The sequence is that of Phosphate acyltransferase from Bradyrhizobium sp. (strain BTAi1 / ATCC BAA-1182).